The primary structure comprises 495 residues: Monoamine oxidase N (495 aa).

Residues Met1–Val19 show a composition bias toward polar residues. The interval Met1 to Gly23 is disordered. Residues Ala493 to Leu495 carry the Microbody targeting signal motif.

The protein belongs to the flavin monoamine oxidase family. FAD serves as cofactor.

It localises to the peroxisome. It catalyses the reaction a secondary aliphatic amine + O2 + H2O = a primary amine + an aldehyde + H2O2. This chain is Monoamine oxidase N (maoN), found in Aspergillus niger.